The chain runs to 92 residues: Small ribosomal subunit protein bS20 (92 aa).

Positions 1-23 are disordered; the sequence is MANSPSAKKRAKQAEKRRSHNAS. Positions 7-20 are enriched in basic residues; it reads AKKRAKQAEKRRSH.

The protein belongs to the bacterial ribosomal protein bS20 family.

In terms of biological role, binds directly to 16S ribosomal RNA. The protein is Small ribosomal subunit protein bS20 of Ectopseudomonas mendocina (strain ymp) (Pseudomonas mendocina).